A 2224-amino-acid polypeptide reads, in one-letter code: Myomegalin (2224 aa).

4 coiled-coil regions span residues 41 to 97 (REDV…RQQE), 162 to 205 (DQYS…LLEE), 236 to 318 (VSES…REML), and 350 to 682 (CSQL…ALRQ). The tract at residues 206–236 (PASMEVQPVPKGLPTQQKPDLHETPTTQPPV) is disordered. Residues 219-236 (PTQQKPDLHETPTTQPPV) show a composition bias toward polar residues. Positions 703-751 (GVTSIGPHHGEQTDQGSMQMPSRDDSTSLTAREEASIPRSTLGDSDTVA) are disordered. Residue threonine 705 is modified to Phosphothreonine. The span at 724–738 (SRDDSTSLTAREEAS) shows a compositional bias: basic and acidic residues. 3 coiled-coil regions span residues 745-822 (GDSD…QLVD), 856-886 (NKRQQLLLMLEGLVDERSRLNEALQAERQLY), and 949-986 (AQEMLHLRAEIHQHLEEKRKAEVELKELKAQIEEAGFS). Disordered stretches follow at residues 1098–1128 (TGLPSLGKHQHQEQENTTTARPGSRPQSLPL), 1141–1161 (NKSQAQDSGHQPEFSLPGSTK), and 1270–1298 (VSPPAKKPLENKPGKQEEFRAHGTPDDSS). A compositionally biased stretch (polar residues) spans 1112–1124 (ENTTTARPGSRPQ). Coiled-coil stretches lie at residues 1159–1187 (STKHLRSQLAQCRQRYQDLQEKLLISEAT), 1295–1331 (DDSSLLRKDIRDLKAQLQNANKVIQNLRSRVRSLSAT), and 1377–1401 (GLQAKKDLESLIQRVSQLEAQLPKT). Residues 1276–1298 (KPLENKPGKQEEFRAHGTPDDSS) show a composition bias toward basic and acidic residues. The Olduvai domain occupies 1497 to 1588 (KDHKSEKEEA…DEKKPSPSHS (92 aa)). Disordered stretches follow at residues 1576-1637 (THYD…SLSQ), 1736-1757 (SSGQWDMMRPQKGSVSGELSSG), 1805-1824 (LSSTARENGSTSHFYSQGLE), and 1962-2001 (KASLGPIAVGQSFPDKAEPANLHQGSAASPPVRDVGLNSP). Polar residues predominate over residues 1599-1609 (ESSSSPISLPT). A compositionally biased stretch (low complexity) spans 1748–1757 (GSVSGELSSG). The stretch at 1769-1958 (GADLLEEHLG…RLQLEQQMDR (190 aa)) forms a coiled coil. Residues 2148–2191 (KEGQLMEKELLDLRAQVSQQEQILQNTAARLKRANQRKKSMEQF) adopt a coiled-coil conformation.

Interacts with PDE4D. Isoform 2 interacts with MAPRE1 and MAPRE3. Isoform 2 forms a pericentrosomal complex with AKAP9, CDK5RAP2 and EB1/MAPRE1; within this complex, may mediate MAPRE1-binding to CDK5RAP2. Interaction with AKAP9 stabilizes both proteins. Isoform 2 interacts (via N-terminus) with CAMSAP2; this interaction is much stronger in the presence of AKAP9. In complex with AKAP9, Isoform 2 recruits CAMSAP2 to the Golgi apparatus. Isoform 2 interacts with unglycosylated LGALS3BP; this interaction may connect the pericentrosomal complex to the gamma-tubulin ring complex (gamma-TuRC) to promote microtubule assembly and acetylation.

It is found in the cytoplasm. The protein localises to the cytoskeleton. Its subcellular location is the microtubule organizing center. It localises to the centrosome. The protein resides in the golgi apparatus. In terms of biological role, functions as an anchor sequestering components of the cAMP-dependent pathway to Golgi and/or centrosomes. Functionally, participates in microtubule dynamics, promoting microtubule assembly. Depending upon the cell context, may act at the level of the Golgi apparatus or that of the centrosome. In complex with AKAP9, recruits CAMSAP2 to the Golgi apparatus and tethers non-centrosomal minus-end microtubules to the Golgi, an important step for polarized cell movement. In complex with AKAP9, EB1/MAPRE1 and CDK5RAP2, contributes to microtubules nucleation and extension from the centrosome to the cell periphery, a crucial process for directed cell migration, mitotic spindle orientation and cell-cycle progression. The sequence is that of Myomegalin (Pde4dip) from Mus musculus (Mouse).